A 708-amino-acid chain; its full sequence is Metabotropic glutamate receptor-like protein L (708 aa).

Residues 1 to 24 form the signal peptide; that stretch reads MKLIIKNLILLLVSCLYFLSNVSC. Residues Asn-21, Asn-235, Asn-310, and Asn-366 are each glycosylated (N-linked (GlcNAc...) asparagine). Over 25 to 370 the chain is Extracellular; it reads DQEVHMALLL…TTGSINKTFM (346 aa). A helical transmembrane segment spans residues 371-391; the sequence is AVSILEMAICLIIGIIVIFFF. Over 392–401 the chain is Cytoplasmic; it reads SRNINIIYST. Residues 402-422 traverse the membrane as a helical segment; that stretch reads IPYCLTILLGASLIAVAIFLW. The Extracellular segment spans residues 423-435; sequence NLRDLNTQICTSK. The helical transmembrane segment at 436 to 456 threads the bilayer; that stretch reads IWMASLGYNVLIGFIIIKSSL. At 457–479 the chain is on the cytoplasmic side; the sequence is IYFKFKEMVKSKNEKISPIPFGR. The helical transmembrane segment at 480 to 500 threads the bilayer; the sequence is IVLWFVPLLIIDCVLLIIYST. The Extracellular segment spans residues 501-531; it reads SGNPGKIDSLGLDGIGRYEYTQNCVNNLTGD. N-linked (GlcNAc...) asparagine glycosylation occurs at Asn-527. Residues 532–552 form a helical membrane-spanning segment; the sequence is IILYIILVFHGLQLLYGCVIA. The Cytoplasmic segment spans residues 553-568; the sequence is WKTRVIDLEEFIEAHD. The chain crosses the membrane as a helical span at residues 569–589; it reads FATAIYLITFCSFIIVILMVG. The Extracellular portion of the chain corresponds to 590–597; it reads VTSTSNRN. Residues 598–618 traverse the membrane as a helical segment; that stretch reads TIISACAIFSSFSCVLIIFGA. The Cytoplasmic portion of the chain corresponds to 619–708; sequence KFWKIYKPVE…SSRAAAQNDN (90 aa). Residues 638-681 are disordered; it reads KPQKSYSGSGGSGNSSGSKSKKTSAHSSTSGVKSGTSAPTQTSQ. The segment covering 669–681 has biased composition (polar residues); sequence VKSGTSAPTQTSQ.

In the N-terminal section; belongs to the BMP lipoprotein family. It in the C-terminal section; belongs to the G-protein coupled receptor 3 family. GABA-B receptor subfamily.

It is found in the membrane. This chain is Metabotropic glutamate receptor-like protein L (far1), found in Dictyostelium discoideum (Social amoeba).